Reading from the N-terminus, the 946-residue chain is MTNLSGKKSLNTVTLVFKLPYYTQWGQSLLIAGSEPALGSWNVKQGLSLSPVHQGNELIWSGRVSVATGFTCQYNYYVVDDNKNVLRSESGEKRKLVLPEGVQDGDVVEIRDWWQDASEALFLRSAFKNVIFNGSENAKRELKTTSLNKSLEPEDIVVQFIVSCPRLGAGSTVVVTGSNPQLGRWQTQDGLKLNYVGDSIWKANCLLRKSEFPIKYKYCKISEAGVSSLEFGPNREADVDLSSPKPSRYVLLSDGALRESPWRGAGVAVPIFSIRSNEDLGVGEFLDLKLLVDWAVNSGFHLVQLLPINDTSVHGMWWDSYPYSSLSVFALHPLYLRVQALSDAIPGDIKDEISQAKKQLDKKDVDYEASLASKLSIARKIFKLEKDKVLNSSSFKQFLSENEEWLKPYAAFCFLRDFFETSDHSQWGRFSQFSKEKLDKLVSEGTLHHDVICFHYYIQYHLYMQLSEAAAYARKKKVILKGDLPIGVDRNSVDTWVYPTLFRMNTATGAPPDYFDKNGQNWGFPTYNWEEMSKDNYGWWRARLTQMAKYFTAYRIDHILGFFRIWELPDHAATGLVGKFRPSIALSQEELLSEGLWDFDRMSRPYILQETLEEKFGSFWTVIAANFLNEYKKQHYEFKEDCNTEKKIIAKLKNSSEKSLWLEKEDSIRRGLFDLLQNIVLIRDPEDSTKFYPRFNQEDTSSFNDLDEHSKNILRRLYYDYYFARQENLWRQNALKTLPVLLNSSDMLACGEDLGLIPACVHPVMQELGLIGLRIQRMPSEPNLEFGIPSQYSYMTVCAPSCHDCSTLRAWWEEDGGRRSRFYQTVIGSDDEPPSRCTPEVANFIVKQHFDAPSMWAIFPLQDLLALKDKYTTRPAKEETINDPTNPKHYWRFRLHVTLDSLLDDKDIQATIKELVTSSGRSFPGKVDGAEESGEKLAKVQLNGKP.

CBM20 domains lie at 7–115 (KKSL…DWWQ) and 150–264 (SLEP…PWRG). Positions 919-946 (SGRSFPGKVDGAEESGEKLAKVQLNGKP) are disordered.

This sequence belongs to the disproportionating enzyme family.

The protein localises to the cytoplasm. It is found in the cytosol. It catalyses the reaction Transfers a segment of a (1-&gt;4)-alpha-D-glucan to a new position in an acceptor, which may be glucose or a (1-&gt;4)-alpha-D-glucan.. Functionally, cytosolic alpha-glucanotransferase essential for the cytosolic metabolism of maltose, an intermediate on the pathway by which starch is converted to sucrose in leaves at night. The polypeptide is 4-alpha-glucanotransferase DPE2 (DPE2) (Oryza sativa subsp. japonica (Rice)).